Here is a 229-residue protein sequence, read N- to C-terminus: Prolactin (229 aa).

Residues 1–30 form the signal peptide; that stretch reads MSNRGASLKGLFLAVLLVSNTLLTKEGVTS. Disulfide bonds link Cys-34-Cys-41, Cys-88-Cys-204, and Cys-221-Cys-229.

The protein belongs to the somatotropin/prolactin family.

The protein resides in the secreted. The polypeptide is Prolactin (PRL) (Gallus gallus (Chicken)).